The sequence spans 256 residues: Small ribosomal subunit protein eS1 (256 aa).

Residues 1-18 (MAVGKNKRLSKGKKGLKK) are compositionally biased toward basic residues. The tract at residues 1–20 (MAVGKNKRLSKGKKGLKKRT) is disordered. A2 carries the post-translational modification N-acetylalanine; partial.

This sequence belongs to the eukaryotic ribosomal protein eS1 family. In terms of assembly, component of the small ribosomal subunit. Mature ribosomes consist of a small (40S) and a large (60S) subunit. The 40S subunit contains about 33 different proteins and 1 molecule of RNA (18S). The 60S subunit contains about 49 different proteins and 3 molecules of RNA (25S, 5.8S and 5S).

It is found in the cytoplasm. The chain is Small ribosomal subunit protein eS1 (rps1) from Talaromyces marneffei (strain ATCC 18224 / CBS 334.59 / QM 7333) (Penicillium marneffei).